The primary structure comprises 931 residues: MSDNEEDYDIARSLTVNLEDSDSDSGSDFSDEEQEVQDIISSEDEAEEQPKKKQKTAKPAKEAFPSLELSGDEDEQDDDKDMASYFAANNPQAKKAKAGSFQSFGLSKLVLTNIAKKGYRQPTPIQRKTIPLIMANRDVVGMARTGSGKTAAFTLPVIEKLKGHSARVGIRAIILSPSRELALQTYKQVKEFSKGSDLRAIVLTGGDSLEDQFSSMVSNPDIVIATPGRFLHLQVEMQLDLKTVEYIVFDEADHLFEQGFAEQLNELLAVLPPQRQSLLFSATLPRSLVDFAKAGLSNPVLVRLDADSKISDQLQMAFFTTKKNEREANLLYVLQEVIKMPLGTAEQIKKLRLMDKRVNDEAEEEELENESGSKRKYKFKKERLPSANVLPSPHSTIVFVPTKHHVEYITTLLRDAGYLVSYIYGTLDQHARKNQLYQFRLGMTTVLVVTDVAARGIDIPVLANVVNYTLPGSSKIFIHRVGRTARAGNKGWAYSIVNEKELPYLLDLELFLGKKILLTAMQEQKCQLLKDKQGDNYVEPKVQYTDRLVLGSCPRLSLETFEELYENLLRNHYELSVIKEVAAKGEKLYYRTRKAASTESVKRAKEIMDTGTWDDQHLLFGPNLEKEKEKFLAKLANRHVKETVFEFNKKGNDRDEDSLVSFMHRRRKQLAPIQRRASERRDLLQREREAGLTHGIEDEILKAHGETGYSASGINDVDEEELQNAFEDADQLSSKSNKKNYRDDRFFISHYAPASVIQDQQLNITSSFANEAASATFDLDNDDKIGNGKQVMQWDRKKGKYINSQSTDKKFIIGESGAKIPATYRSGKFDEWKKKRNMQPAKVGSLETEGESKQRFKHKRNAAPKLPDKYRDDYHKQKKKVEKAVESGRDVKGYHKPGQRSEIKSTEDIRKARLLKEKKMAKNARPSRKRK.

The tract at residues 1–78 (MSDNEEDYDI…LSGDEDEQDD (78 aa)) is disordered. Residues 19–47 (EDSDSDSGSDFSDEEQEVQDIISSEDEAE) are compositionally biased toward acidic residues. Residues 99-127 (GSFQSFGLSKLVLTNIAKKGYRQPTPIQR) carry the Q motif motif. Residues 130-302 (IPLIMANRDV…KAGLSNPVLV (173 aa)) enclose the Helicase ATP-binding domain. Residue 143 to 150 (ARTGSGKT) participates in ATP binding. Positions 250–253 (DEAD) match the DEAD box motif. The Helicase C-terminal domain occupies 372-532 (GSKRKYKFKK…EQKCQLLKDK (161 aa)). A disordered region spans residues 836-910 (RNMQPAKVGS…SEIKSTEDIR (75 aa)). 2 stretches are compositionally biased toward basic and acidic residues: residues 866–875 (LPDKYRDDYH) and 882–910 (EKAV…EDIR).

Belongs to the DEAD box helicase family. DDX54/DBP10 subfamily.

It is found in the nucleus. The protein resides in the nucleolus. The catalysed reaction is ATP + H2O = ADP + phosphate + H(+). In terms of biological role, ATP-binding RNA helicase involved in the biogenesis of 60S ribosomal subunits and is required for the normal formation of 25S and 5.8S rRNAs. In Scheffersomyces stipitis (strain ATCC 58785 / CBS 6054 / NBRC 10063 / NRRL Y-11545) (Yeast), this protein is ATP-dependent RNA helicase DBP10 (DBP10).